Here is a 96-residue protein sequence, read N- to C-terminus: Phosphoribosyl-ATP pyrophosphatase (96 aa).

Belongs to the PRA-PH family.

Its subcellular location is the cytoplasm. It carries out the reaction 1-(5-phospho-beta-D-ribosyl)-ATP + H2O = 1-(5-phospho-beta-D-ribosyl)-5'-AMP + diphosphate + H(+). Its pathway is amino-acid biosynthesis; L-histidine biosynthesis; L-histidine from 5-phospho-alpha-D-ribose 1-diphosphate: step 2/9. This chain is Phosphoribosyl-ATP pyrophosphatase, found in Methanococcus maripaludis (strain DSM 14266 / JCM 13030 / NBRC 101832 / S2 / LL).